A 132-amino-acid polypeptide reads, in one-letter code: Small ribosomal subunit protein uS8 (132 aa).

Belongs to the universal ribosomal protein uS8 family. As to quaternary structure, part of the 30S ribosomal subunit. Contacts proteins S5 and S12.

One of the primary rRNA binding proteins, it binds directly to 16S rRNA central domain where it helps coordinate assembly of the platform of the 30S subunit. This chain is Small ribosomal subunit protein uS8, found in Psychrobacter sp. (strain PRwf-1).